Here is an 800-residue protein sequence, read N- to C-terminus: Protein MICRORCHIDIA 4 (800 aa).

Disordered regions lie at residues 1-76 (MEPI…ARSD) and 552-702 (AKRQ…RTLS). The segment covering 9-18 (NPVTTSTLST) has biased composition (polar residues). Positions 36–47 (ELSSSNEGSELG) are enriched in low complexity. 2 stretches are compositionally biased toward basic and acidic residues: residues 559 to 578 (SAKDTEKDTEDRESSPEFDP) and 628 to 641 (VSKDIGYKSSEKGG). Positions 666–675 (NSDDDYDCDS) are enriched in acidic residues. A coiled-coil region spans residues 699–766 (RTLSQLEQEN…QASLIDVFAE (68 aa)). 2 consecutive short sequence motifs (nuclear localization signal) follow at residues 716–723 (DKKEEVFL) and 735–742 (LRKTLEAE).

It belongs to the MORC ATPase protein family. Homodimer and heterodimer. Component of an RNA-directed DNA methylation (RdDM) complex. Forms homomeric complexes. It depends on Mg(2+) as a cofactor. Mn(2+) is required as a cofactor.

The protein localises to the nucleus. In terms of biological role, exhibits ATPase activity. Binds DNA/RNA in a non-specific manner and exhibits endonuclease activity. Probably involved in DNA repair. Involved in RNA-directed DNA methylation (RdDM) as a component of the RdDM machinery and required for gene silencing. May also be involved in the regulation of chromatin architecture to maintain gene silencing. Together with MORC7, acts to suppress a wide set of non-methylated protein-coding genes, especially involved in pathogen response. Positive regulator of defense against the oomycete Hyaloperonospora arabidopsidis (Hpa). This Arabidopsis thaliana (Mouse-ear cress) protein is Protein MICRORCHIDIA 4.